Reading from the N-terminus, the 79-residue chain is Hematopoietic cell signal transducer (79 aa).

Positions 1 to 18 are cleaved as a signal peptide; sequence MAPPGGILFLLLLPVAAA. Over 19 to 35 the chain is Extracellular; the sequence is QVTSGSCSGCGPLSLPL. Residues 36-56 form a helical membrane-spanning segment; that stretch reads LAGLVAADAVVSLLIVVGVFV. The Cytoplasmic portion of the chain corresponds to 57-79; the sequence is CGRPRSRPTQEDGKIYINMPGRG. Tyrosine 72 carries the phosphotyrosine modification. The tract at residues 72–74 is GRB2 binding site; the sequence is YIN. The tract at residues 72 to 75 is PIK3R1 binding site; it reads YINM.

Belongs to the DAP10 family. As to quaternary structure, homodimer; Disulfide-linked. Heterohexamer composed of four subunits of HCST/DAP10 and two subunits of KLRK1. Interacts (via transmembrane domain) with KLRK1 (via transmembrane domain); the interaction is required for KLRK1 NK cell surface and induces NK cell-mediated cytotoxicity. Interacts with PIK3R1 and GRB2. Interacts with CLEC5A. Forms an CLEC5A/TYROBP/HCST trimolecular complex depending almost solely on TYROBP. Interacts with KLRK1. Interacts with CD300H. Phosphorylated; PIK3R1 and GRB2 associate specifically with tyrosine-phosphorylated HCST. Post-translationally, O-glycosylated. As to expression, expressed predominantly in lymphohematopoietic tissues.

It is found in the membrane. Functionally, transmembrane adapter protein which associates with KLRK1 to form an activation receptor KLRK1-HCST in lymphoid and myeloid cells; this receptor plays a major role in triggering cytotoxicity against target cells expressing cell surface ligands such as MHC class I chain-related MICA and MICB, and UL16-binding proteins (ULBPs); these ligands are up-regulated by stress conditions and pathological state such as viral infection and tumor transformation. Functions as a docking site for PI3-kinase PIK3R1 and GRB2. Interaction of ULBPs with KLRK1-HCST triggers calcium mobilization and activation of the PIK3R1, MAP2K/ERK, and JAK2/STAT5 signaling pathways. Both PIK3R1 and GRB2 are required for full KLRK1-HCST-mediated activation and ultimate killing of target cells. In NK cells, KLRK1-HCST signaling directly induces cytotoxicity and enhances cytokine production initiated via DAP12/TYROBP-associated receptors. In T-cells, it provides primarily costimulation for TCR-induced signals. KLRK1-HCST receptor plays a role in immune surveillance against tumors and is required for cytolysis of tumors cells; indeed, melanoma cells that do not express KLRK1 ligands escape from immune surveillance mediated by NK cells. This chain is Hematopoietic cell signal transducer (HCST), found in Sus scrofa (Pig).